A 236-amino-acid polypeptide reads, in one-letter code: Ribonuclease HIII (236 aa).

In terms of domain architecture, RNase H type-2 spans 9–236; it reads LYLIGSDESG…NVASFLKQLA (228 aa). A divalent metal cation-binding residues include Asp15, Glu16, and Asp122.

The protein belongs to the RNase HII family. RnhC subfamily. It depends on a divalent metal cation as a cofactor.

It localises to the cytoplasm. It catalyses the reaction Endonucleolytic cleavage to 5'-phosphomonoester.. Its function is as follows. Endonuclease that specifically degrades the RNA of RNA-DNA hybrids. The polypeptide is Ribonuclease HIII (rnhC) (Mycoplasma pneumoniae (strain ATCC 29342 / M129 / Subtype 1) (Mycoplasmoides pneumoniae)).